A 130-amino-acid polypeptide reads, in one-letter code: Protein ApaG (130 aa).

Residues 3–127 enclose the ApaG domain; sequence SQTTRDIEVT…FSLDSPHEKP (125 aa).

This Paramagnetospirillum magneticum (strain ATCC 700264 / AMB-1) (Magnetospirillum magneticum) protein is Protein ApaG.